The chain runs to 484 residues: Dynein regulatory complex subunit 2 (484 aa).

Coiled-coil stretches lie at residues 92-160 and 374-403; these read VDCK…RKTI and KEQE…GMEN.

It belongs to the DRC2 family. Component of the nexin-dynein regulatory complex (N-DRC). Interacts with DRC1.

It is found in the cytoplasm. The protein localises to the cytoskeleton. The protein resides in the flagellum basal body. Its subcellular location is the cell projection. It localises to the cilium. It is found in the flagellum. The protein localises to the flagellum axoneme. Its function is as follows. Component of the nexin-dynein regulatory complex (N-DRC), a key regulator of ciliary/flagellar motility which maintains the alignment and integrity of the distal axoneme and regulates microtubule sliding in motile axonemes. Plays a critical role in the assembly of N-DRC and also stabilizes the assembly of multiple inner dynein arms and radial spokes. Coassembles with DRC1 to form a central scaffold needed for assembly of the N-DRC and its attachment to the outer doublet microtubules. The protein is Dynein regulatory complex subunit 2 (CCDC65) of Macaca fascicularis (Crab-eating macaque).